The sequence spans 883 residues: Valine--tRNA ligase (883 aa).

A 'HIGH' region motif is present at residues 50–60 (PNVTGKLHMGH). Positions 527–531 (KMSKS) match the 'KMSKS' region motif. An ATP-binding site is contributed by Lys530. The stretch at 811 to 883 (LNELIDLDEE…KQRLEQLQRA (73 aa)) forms a coiled coil. The segment at 859–883 (QRTKRSDFEDQLTSTKQRLEQLQRA) is disordered.

This sequence belongs to the class-I aminoacyl-tRNA synthetase family. ValS type 1 subfamily. As to quaternary structure, monomer.

The protein localises to the cytoplasm. It carries out the reaction tRNA(Val) + L-valine + ATP = L-valyl-tRNA(Val) + AMP + diphosphate. In terms of biological role, catalyzes the attachment of valine to tRNA(Val). As ValRS can inadvertently accommodate and process structurally similar amino acids such as threonine, to avoid such errors, it has a 'posttransfer' editing activity that hydrolyzes mischarged Thr-tRNA(Val) in a tRNA-dependent manner. This Lacticaseibacillus casei (Lactobacillus casei) protein is Valine--tRNA ligase.